The primary structure comprises 147 residues: 3-hydroxyacyl-[acyl-carrier-protein] dehydratase FabZ (147 aa).

The active site involves His-50.

This sequence belongs to the thioester dehydratase family. FabZ subfamily.

It is found in the cytoplasm. The enzyme catalyses a (3R)-hydroxyacyl-[ACP] = a (2E)-enoyl-[ACP] + H2O. Involved in unsaturated fatty acids biosynthesis. Catalyzes the dehydration of short chain beta-hydroxyacyl-ACPs and long chain saturated and unsaturated beta-hydroxyacyl-ACPs. The sequence is that of 3-hydroxyacyl-[acyl-carrier-protein] dehydratase FabZ from Lactiplantibacillus plantarum (strain ATCC BAA-793 / NCIMB 8826 / WCFS1) (Lactobacillus plantarum).